The following is a 68-amino-acid chain: Peptide Smp13 (68 aa).

A signal peptide spans 1 to 23 (MKTQFAIFLITLVLFQMFSQSDA). Phenylalanine 36 carries the post-translational modification Phenylalanine amide. The propeptide occupies 37–68 (GKRGLGDHDDLDELFDGEISQADIDFLKEIMQ).

The protein belongs to the non-disulfide-bridged peptide (NDBP) superfamily. Short antimicrobial peptide (group 4) family. Expressed by the venom gland.

The protein localises to the secreted. Its function is as follows. Peptide with unknown function. Does not show antimicrobial activity against the Gram-positive, and Gram-negative bacteria tested, as well as against the fungus C.albicans. The chain is Peptide Smp13 from Scorpio palmatus (Israeli golden scorpion).